A 479-amino-acid polypeptide reads, in one-letter code: MEGKVDVLLTWLKKSDKFYIAPNISICESPETGRGIVLSHGSIRKNDIIVSVPSSKQLNFHTILYHISKFNKELNIPGITIDRKPINYEDNIIEAENKAWADPRYGLYSELSKEFLLSLSSFQLVSFYILVENFLLPKWTHNEIYSDWKPFFDVWPSMEELRSIPAIWNCDPNSRYHSLIEYLPAASRKHMARISGLVREDWETISEVVLKWNEIYGSLSCTKNSDKFTSDELFSLFVHVYFIINSRCLYAKIPLKIEDSPSNFTLVPYVDFMNHICESDLHCYPQLSPQLRSEGENIIGIGQFTIRCGDHLYDNINEELFLNYGAHSNDFLLNEYGFVVDGNKWNYLDISDEIIELIDDDKKEVKTFLLEHDYWGDYTINETDISYRIFVALNYYVTRDERRVRKFIEGYISEDYFKPKISSVLKELLVSLTAKYTKTLSELTEKVSNLENNLCLQNLITIYKGYIKILTQHLQDLQS.

Positions 22 to 325 (PNISICESPE…INEELFLNYG (304 aa)) constitute an SET domain. Position 324 (Y324) interacts with S-adenosyl-L-methionine.

This sequence belongs to the class V-like SAM-binding methyltransferase superfamily. RKM2 family.

Functionally, S-adenosyl-L-methionine-dependent protein-lysine N-methyltransferase that trimethylates 60S ribosomal protein L12 (RPL12A and RPL12B) at 'Lys-4' and 'Lys-11'. The sequence is that of Ribosomal lysine N-methyltransferase 2 from Saccharomyces cerevisiae (strain ATCC 204508 / S288c) (Baker's yeast).